Consider the following 2005-residue polypeptide: Structural maintenance of chromosomes flexible hinge domain-containing protein 1 (2005 aa).

Positions 1-13 (MAAADGGGPGGAS) are enriched in gly residues. The segment at 1 to 23 (MAAADGGGPGGASVGTEEDGGGV) is disordered. A2 is modified (N-acetylalanine). The ATPase activity domain stretch occupies residues 111–702 (TKERIDFLPH…LSVTWPEGDE (592 aa)). K1349 carries the post-translational modification N6-acetyllysine. Residues K1374 and K1496 each participate in a glycyl lysine isopeptide (Lys-Gly) (interchain with G-Cter in SUMO2) cross-link. T1499 bears the Phosphothreonine mark. The region spanning 1720-1847 (GDVLGKIAHL…DNLDAANHYR (128 aa)) is the SMC hinge domain. K1802 carries the N6-succinyllysine modification. S1974 carries the phosphoserine modification.

Belongs to the SMC family. Highly divergent. In terms of assembly, homodimer; homodimerizes via its SMC hinge domain. Interacts with LRIF1. Post-translationally, sumoylated with SUMO1.

The protein resides in the chromosome. It catalyses the reaction ATP + H2O = ADP + phosphate + H(+). Non-canonical member of the structural maintenance of chromosomes (SMC) protein family that plays a key role in epigenetic silencing by regulating chromatin architecture. Promotes heterochromatin formation in both autosomes and chromosome X, probably by mediating the merge of chromatin compartments. Plays a key role in chromosome X inactivation in females by promoting the spreading of heterochromatin. Recruited to inactivated chromosome X by Xist RNA and acts by mediating the merge of chromatin compartments: promotes random chromatin interactions that span the boundaries of existing structures, leading to create a compartment-less architecture typical of inactivated chromosome X. Required to facilitate Xist RNA spreading. Also required for silencing of a subset of clustered autosomal loci in somatic cells, such as the DUX4 locus. Has ATPase activity; may participate in structural manipulation of chromatin in an ATP-dependent manner as part of its role in gene expression regulation. Also plays a role in DNA repair: localizes to sites of DNA double-strand breaks in response to DNA damage to promote the repair of DNA double-strand breaks. Acts by promoting non-homologous end joining (NHEJ) and inhibiting homologous recombination (HR) repair. In Homo sapiens (Human), this protein is Structural maintenance of chromosomes flexible hinge domain-containing protein 1.